The chain runs to 2282 residues: Acetyl-CoA carboxylase (2282 aa).

Positions Asn16–Ser515 constitute a Biotin carboxylation domain. Positions Tyr170–Met360 constitute an ATP-grasp domain. Ala196–Leu253 is a binding site for ATP. Residues Glu319, Glu331, and Asn333 each coordinate Mn(2+). The active site involves Arg335. Positions Phe646–Glu720 constitute a Biotinyl-binding domain. The residue at position 687 (Lys687) is an N6-biotinyllysine. Positions Gly1109 to Gly1129 are enriched in low complexity. The tract at residues Gly1109 to Pro1141 is disordered. In terms of domain architecture, CoA carboxyltransferase N-terminal spans Pro1495–Ser1851. Residues Pro1495–Lys2178 are carboxyltransferase. Positions 1761, 2068, and 2070 each coordinate CoA. Residues Pro1852–Lys2178 enclose the CoA carboxyltransferase C-terminal domain.

Biotin is required as a cofactor. It depends on Mn(2+) as a cofactor.

Its subcellular location is the cytoplasm. The enzyme catalyses hydrogencarbonate + acetyl-CoA + ATP = malonyl-CoA + ADP + phosphate + H(+). The catalysed reaction is N(6)-biotinyl-L-lysyl-[protein] + hydrogencarbonate + ATP = N(6)-carboxybiotinyl-L-lysyl-[protein] + ADP + phosphate + H(+). It functions in the pathway lipid metabolism; malonyl-CoA biosynthesis; malonyl-CoA from acetyl-CoA: step 1/1. Its function is as follows. Catalyzes the rate-limiting reaction in the biogenesis of long-chain fatty acids. Carries out three functions: biotin carboxyl carrier protein, biotin carboxylase and carboxyltransferase. This Dictyostelium discoideum (Social amoeba) protein is Acetyl-CoA carboxylase (accA).